The following is a 270-amino-acid chain: Phosphatidylglycerol--prolipoprotein diacylglyceryl transferase (270 aa).

4 helical membrane-spanning segments follow: residues 18–38 (ITIY…LWLA), 55–75 (LVLF…VLFE), 90–110 (WQGG…GAVF), and 115–135 (GLSF…GQAI). Position 137 (R137) interacts with a 1,2-diacyl-sn-glycero-3-phospho-(1'-sn-glycerol). A run of 3 helical transmembrane segments spans residues 177-197 (HPTF…LLWL), 205-225 (GELF…IEGM), and 236-256 (LRAA…LWIV).

The protein belongs to the Lgt family.

It is found in the cell membrane. The enzyme catalyses L-cysteinyl-[prolipoprotein] + a 1,2-diacyl-sn-glycero-3-phospho-(1'-sn-glycerol) = an S-1,2-diacyl-sn-glyceryl-L-cysteinyl-[prolipoprotein] + sn-glycerol 1-phosphate + H(+). The protein operates within protein modification; lipoprotein biosynthesis (diacylglyceryl transfer). Its function is as follows. Catalyzes the transfer of the diacylglyceryl group from phosphatidylglycerol to the sulfhydryl group of the N-terminal cysteine of a prolipoprotein, the first step in the formation of mature lipoproteins. The protein is Phosphatidylglycerol--prolipoprotein diacylglyceryl transferase of Geobacillus kaustophilus (strain HTA426).